The primary structure comprises 78 residues: Beta sliding clamp (78 aa).

The protein belongs to the beta sliding clamp family. Forms a ring-shaped head-to-tail homodimer around DNA which binds and tethers DNA polymerases and other proteins to the DNA. The DNA replisome complex has a single clamp-loading complex (3 tau and 1 each of delta, delta', psi and chi subunits) which binds 3 Pol III cores (1 core on the leading strand and 2 on the lagging strand) each with a beta sliding clamp dimer. Additional proteins in the replisome are other copies of gamma, psi and chi, Ssb, DNA helicase and RNA primase.

It is found in the cytoplasm. Confers DNA tethering and processivity to DNA polymerases and other proteins. Acts as a clamp, forming a ring around DNA (a reaction catalyzed by the clamp-loading complex) which diffuses in an ATP-independent manner freely and bidirectionally along dsDNA. Initially characterized for its ability to contact the catalytic subunit of DNA polymerase III (Pol III), a complex, multichain enzyme responsible for most of the replicative synthesis in bacteria; Pol III exhibits 3'-5' exonuclease proofreading activity. The beta chain is required for initiation of replication as well as for processivity of DNA replication. The protein is Beta sliding clamp (dnaN) of Serratia marcescens.